Consider the following 794-residue polypeptide: Signal transducer and activator of transcription 5A (794 aa).

Residue tyrosine 90 is modified to Phosphotyrosine. Residue serine 128 is modified to Phosphoserine. Residues 589 to 686 (WNDGAILGFV…EVFSKYYTPV (98 aa)) enclose the SH2 domain. Tyrosine 682 bears the Phosphotyrosine mark. Position 694 is a phosphotyrosine; by JAK2 (tyrosine 694). Positions 771–794 (PMDSLEPSLPPPTGLFTPGRGSLS) are disordered.

Belongs to the transcription factor STAT family. In terms of assembly, forms a homodimer or a heterodimer with a related family member. Binds NR3C1. Interacts with NCOA1 and SOCS7. Interacts with ERBB4. Interacts with EBF4. Interacts with CD69. In terms of processing, ISGylated. Post-translationally, tyrosine phosphorylated in response to KITLG/SCF, IL2, IL3, IL7, IL15, CSF2/GMCSF, GH1, PRL, EPO and THPO. Activated KIT promotes phosphorylation on tyrosine residues and subsequent translocation to the nucleus. Tyrosine phosphorylated in response to constitutively activated FGFR1, FGFR2, FGFR3 and FGFR4. Tyrosine phosphorylation is required for DNA-binding activity and dimerization. Serine phosphorylation is also required for maximal transcriptional activity. Tyrosine phosphorylated in response to signaling via activated FLT3; wild-type FLT3 results in much weaker phosphorylation than constitutively activated mutant FLT3. Alternatively, can be phosphorylated by JAK2 at Tyr-694.

The protein localises to the cytoplasm. The protein resides in the nucleus. Its function is as follows. Carries out a dual function: signal transduction and activation of transcription. Mediates cellular responses to the cytokine KITLG/SCF and other growth factors. May mediate cellular responses to activated FGFR1, FGFR2, FGFR3 and FGFR4. Binds to the GAS element and activates PRL-induced transcription. Regulates the expression of milk proteins during lactation. This Bos taurus (Bovine) protein is Signal transducer and activator of transcription 5A (STAT5A).